Reading from the N-terminus, the 504-residue chain is MELLTGTDLWPVAIFTVIFILLVDLTHQRQRWTSRYPPGPVPWPVLGNLLQVDLGNMPYSLYKLQNRYGDVFSLQMAWKPMVVINGLKAMKEMLLTCGEDTADRPPVPIFEYLGVKPGSQGVVLAPYGPEWREQRRFSVSTLRNFGLGKKSLEDWVTKEANHLCDAFTAQAGQPINPNPMLNKSTCNVIASLIFARRFEYEDPFLIRMLKVLEQSLTEVSGLIPEVLNAFPILLRIPRLADKALQGQKSFIAILDNLLTENRTTWDPVQAPRNLTDAFLAEIEKAKGNPESSFNDENLLMVVRDLFGAGMLTTSTTLSWALMLMILHPDVQRRVQQEIDEVIGQVRHPEMADQAHMPYTNAVIHEVQRFGDIVPVNLPRITSHDIEVQDFLIPKGTILLPNMSSMLKDESVWEKPLRFHPEHFLDAQGHFVKPEAFMPFSAGRRSCLGEALARMELFLFFTCLLQRFSFSVPDGQPQPSNSGVYGILVAPSPYQLCAVVRDQGH.

The residue at position 249 (Ser-249) is a Phosphoserine. A heme-binding site is contributed by Cys-446.

This sequence belongs to the cytochrome P450 family. Requires heme as cofactor.

It localises to the endoplasmic reticulum membrane. It is found in the microsome membrane. It catalyses the reaction an organic molecule + reduced [NADPH--hemoprotein reductase] + O2 = an alcohol + oxidized [NADPH--hemoprotein reductase] + H2O + H(+). In terms of biological role, cytochromes P450 are a group of heme-thiolate monooxygenases. In liver microsomes, this enzyme is involved in an NADPH-dependent electron transport pathway. It oxidizes a variety of structurally unrelated compounds, including steroids, fatty acids, and xenobiotics. The sequence is that of Cytochrome P450 2D9 (Cyp2d9) from Mus musculus (Mouse).